Reading from the N-terminus, the 640-residue chain is Threonine--tRNA ligase (640 aa).

Positions 1 to 61 constitute a TGS domain; sequence MPTITLPDGS…ENDASLQIIT (61 aa). Residues 242 to 533 are catalytic; it reads DHRKIGKRLG…LIEHYEGAFP (292 aa). The Zn(2+) site is built by C333, H384, and H510.

This sequence belongs to the class-II aminoacyl-tRNA synthetase family. Homodimer. The cofactor is Zn(2+).

The protein resides in the cytoplasm. The catalysed reaction is tRNA(Thr) + L-threonine + ATP = L-threonyl-tRNA(Thr) + AMP + diphosphate + H(+). Functionally, catalyzes the attachment of threonine to tRNA(Thr) in a two-step reaction: L-threonine is first activated by ATP to form Thr-AMP and then transferred to the acceptor end of tRNA(Thr). Also edits incorrectly charged L-seryl-tRNA(Thr). The protein is Threonine--tRNA ligase of Pseudomonas savastanoi pv. phaseolicola (strain 1448A / Race 6) (Pseudomonas syringae pv. phaseolicola (strain 1448A / Race 6)).